The chain runs to 330 residues: G-protein coupled receptor 157 (330 aa).

Over 1 to 15 (MPTPAPPTELLPWER) the chain is Extracellular. The chain crosses the membrane as a helical span at residues 16–36 (AVVLLSCVLSALGSGLLVATH). The Cytoplasmic portion of the chain corresponds to 37–48 (ALWPDLRSRARR). The helical transmembrane segment at 49–69 (LLLFLSLADLLSAASYFYGVL) threads the bilayer. Residues 70-87 (QDFAGTSWDCVLQGALST) lie on the Extracellular side of the membrane. A helical membrane pass occupies residues 88–108 (FANTSSFFWTVAIALYLYLNI). Residues 109 to 119 (VRATRGPCTDH) lie on the Cytoplasmic side of the membrane. A helical membrane pass occupies residues 120 to 140 (LVWAFHLISWGVPLAITVAAV). Over 141-166 (CLKKIGYDASDVSVGWCWINLEAEDR) the chain is Extracellular. Residues 167–187 (VLWMLLTGKLWEMLAYILLPL) traverse the membrane as a helical segment. Topologically, residues 188 to 227 (LYLLVRKHINRAHQALSEYRPIWEGRQLQRGSPTSMADKK) are cytoplasmic. The helical transmembrane segment at 228 to 250 (LILIPFIFICLRVWSTVRFVLTL) threads the bilayer. Residues 251–259 (CGSPVVQAP) are Extracellular-facing. A helical membrane pass occupies residues 260–282 (VLVVLHGIGNTFQGGANCIMFVL). At 283-330 (CTRAVRTRLFSLCCCYPRPPTQNPPGASIPPKMGESQESRRTPEVPST) the chain is on the cytoplasmic side. The segment at 303–330 (TQNPPGASIPPKMGESQESRRTPEVPST) is disordered. Residues 317–330 (ESQESRRTPEVPST) are compositionally biased toward basic and acidic residues.

The protein belongs to the G-protein coupled receptor 2 family.

Its subcellular location is the cell projection. The protein localises to the cilium membrane. Its function is as follows. Orphan receptor that promotes neuronal differentiation of radial glial progenitors (RGPs). The activity of this receptor is mediated by a G(q)-protein that activates a phosphatidylinositol-calcium second messenger. The chain is G-protein coupled receptor 157 (Gpr157) from Rattus norvegicus (Rat).